The primary structure comprises 294 residues: uncharacterized protein (294 aa).

The protein belongs to the glycosyltransferase 2 family.

This is an uncharacterized protein from Haemophilus influenzae (strain ATCC 51907 / DSM 11121 / KW20 / Rd).